The following is a 258-amino-acid chain: Snake venom serine protease 5 (258 aa).

Residues 1 to 18 (MVLIRVLANLLILQLSYA) form the signal peptide. Positions 19–24 (QKSSEL) are excised as a propeptide. A Peptidase S1 domain is found at 25 to 249 (VVGGRPCNIN…HLDWIQNIIA (225 aa)). Disulfide bonds link Cys31/Cys163, Cys50/Cys66, Cys98/Cys256, Cys142/Cys210, Cys174/Cys189, and Cys200/Cys225. An N-linked (GlcNAc...) asparagine glycan is attached at Asn44. Catalysis depends on His65, which acts as the Charge relay system. A glycan (N-linked (GlcNAc...) asparagine) is linked at Asn103. The active-site Charge relay system is Asp110. Residues Asn121, Asn122, Asn154, and Asn170 are each glycosylated (N-linked (GlcNAc...) asparagine). Ser204 acts as the Charge relay system in catalysis. An N-linked (GlcNAc...) asparagine glycan is attached at Asn251.

It belongs to the peptidase S1 family. Snake venom subfamily. Monomer. In terms of tissue distribution, expressed by the venom gland.

It localises to the secreted. Functionally, snake venom serine protease that may act in the hemostasis system of the prey. This chain is Snake venom serine protease 5, found in Trimeresurus stejnegeri (Chinese green tree viper).